A 155-amino-acid polypeptide reads, in one-letter code: Class I hydrophobin C (155 aa).

A signal peptide spans 1 to 22 (MLVTMRLSRSIAVFTLVTYATG). Intrachain disulfides connect cysteine 52–cysteine 129, cysteine 60–cysteine 123, cysteine 61–cysteine 101, and cysteine 130–cysteine 148.

This sequence belongs to the fungal hydrophobin family. Self-assembles to form functional amyloid fibrils called rodlets. Self-assembly into fibrillar rodlets occurs spontaneously at hydrophobic:hydrophilic interfaces and the rodlets further associate laterally to form amphipathic monolayers.

The protein localises to the secreted. It localises to the spore wall. In terms of biological role, aerial growth, conidiation, and dispersal of filamentous fungi in the environment rely upon a capability of their secreting small amphipathic proteins called hydrophobins (HPBs) with low sequence identity. Class I can self-assemble into an outermost layer of rodlet bundles on aerial cell surfaces, conferring cellular hydrophobicity that supports fungal growth, development and dispersal; whereas Class II form highly ordered films at water-air interfaces through intermolecular interactions but contribute nothing to the rodlet structure. RodC is a class I hydrophobin that, unlike rodA, is not required for rodlet formation. This Aspergillus fumigatus (strain ATCC MYA-4609 / CBS 101355 / FGSC A1100 / Af293) (Neosartorya fumigata) protein is Class I hydrophobin C.